Consider the following 368-residue polypeptide: MFTVNYILDLFHTINATEVQHTLMHKRPASLHEVLRLAGLLQGYKDFLSLTKQAEAFFQAGDYRSAFNTISKMWVHPQIVPALLLMECFETRELTVPYWYKSIKLRRQYIQKKNGGVRPIIVAHKGLRICMAVINRLLQSCCVSWSNQTFGFRPGFGTHHAVLHLAQKAQQMLNKQQQAVLVTFDLQAAYNSVDIKHLMQTLQLQYLPNDMKKLIWMWQHLPLAQLNAGINGLAQGYAYSPTLFAWYVDQLVGQHMDFTIYADNFAGVFLTQQDAQFAVKEAQTLLQKSGLLIAPSSIKMHLLDKNQHSELNWLGHKVLFPSCTVKLQHHQLLVNQHSPQVWTIQKWDKMLRTLGWVQLALNADWRRF.

The 228-residue stretch at T91–V318 folds into the Reverse transcriptase domain.

The protein localises to the mitochondrion. The protein is Reverse transcriptase-like protein (RTL) of Chlamydomonas reinhardtii (Chlamydomonas smithii).